A 592-amino-acid chain; its full sequence is V-type ATP synthase alpha chain (592 aa).

ATP is bound at residue 232-239 (GPFGAGKT).

The protein belongs to the ATPase alpha/beta chains family.

The enzyme catalyses ATP + H2O + 4 H(+)(in) = ADP + phosphate + 5 H(+)(out). Its function is as follows. Produces ATP from ADP in the presence of a proton gradient across the membrane. The V-type alpha chain is a catalytic subunit. This chain is V-type ATP synthase alpha chain, found in Clostridium botulinum (strain Eklund 17B / Type B).